The sequence spans 186 residues: Ribosome-recycling factor (186 aa).

Belongs to the RRF family.

The protein resides in the cytoplasm. Responsible for the release of ribosomes from messenger RNA at the termination of protein biosynthesis. May increase the efficiency of translation by recycling ribosomes from one round of translation to another. The sequence is that of Ribosome-recycling factor from Cytophaga hutchinsonii (strain ATCC 33406 / DSM 1761 / CIP 103989 / NBRC 15051 / NCIMB 9469 / D465).